Consider the following 347-residue polypeptide: Holliday junction branch migration complex subunit RuvB (347 aa).

Positions 1 to 186 (MKDENSINFL…FGITARFELY (186 aa)) are large ATPase domain (RuvB-L). Residues Leu25, Arg26, Gly67, Lys70, Thr71, Thr72, 133–135 (EDY), Arg176, Tyr186, and Arg223 contribute to the ATP site. Thr71 serves as a coordination point for Mg(2+). Residues 187 to 257 (SEIELVEIIK…IVSIGLEMLR (71 aa)) form a small ATPAse domain (RuvB-S) region. A head domain (RuvB-H) region spans residues 260-347 (GEGLDEQDRN…DISENQRVSF (88 aa)). Positions 315 and 320 each coordinate DNA.

This sequence belongs to the RuvB family. Homohexamer. Forms an RuvA(8)-RuvB(12)-Holliday junction (HJ) complex. HJ DNA is sandwiched between 2 RuvA tetramers; dsDNA enters through RuvA and exits via RuvB. An RuvB hexamer assembles on each DNA strand where it exits the tetramer. Each RuvB hexamer is contacted by two RuvA subunits (via domain III) on 2 adjacent RuvB subunits; this complex drives branch migration. In the full resolvosome a probable DNA-RuvA(4)-RuvB(12)-RuvC(2) complex forms which resolves the HJ.

Its subcellular location is the cytoplasm. It carries out the reaction ATP + H2O = ADP + phosphate + H(+). Its function is as follows. The RuvA-RuvB-RuvC complex processes Holliday junction (HJ) DNA during genetic recombination and DNA repair, while the RuvA-RuvB complex plays an important role in the rescue of blocked DNA replication forks via replication fork reversal (RFR). RuvA specifically binds to HJ cruciform DNA, conferring on it an open structure. The RuvB hexamer acts as an ATP-dependent pump, pulling dsDNA into and through the RuvAB complex. RuvB forms 2 homohexamers on either side of HJ DNA bound by 1 or 2 RuvA tetramers; 4 subunits per hexamer contact DNA at a time. Coordinated motions by a converter formed by DNA-disengaged RuvB subunits stimulates ATP hydrolysis and nucleotide exchange. Immobilization of the converter enables RuvB to convert the ATP-contained energy into a lever motion, pulling 2 nucleotides of DNA out of the RuvA tetramer per ATP hydrolyzed, thus driving DNA branch migration. The RuvB motors rotate together with the DNA substrate, which together with the progressing nucleotide cycle form the mechanistic basis for DNA recombination by continuous HJ branch migration. Branch migration allows RuvC to scan DNA until it finds its consensus sequence, where it cleaves and resolves cruciform DNA. The polypeptide is Holliday junction branch migration complex subunit RuvB (Borrelia garinii subsp. bavariensis (strain ATCC BAA-2496 / DSM 23469 / PBi) (Borreliella bavariensis)).